The primary structure comprises 1111 residues: Kinesin-like protein KIP1 (1111 aa).

Over residues Met-1 to Thr-11 the composition is skewed to polar residues. The segment at Met-1 to Met-34 is disordered. The Kinesin motor domain maps to Asn-52–Ile-410. Gly-141–Thr-148 provides a ligand contact to ATP. Coiled coils occupy residues Thr-424–Asn-510, Lys-648–Ser-670, Lys-710–Ile-780, and His-808–Leu-828. Positions Ala-1007–Ser-1016 are enriched in basic and acidic residues. A disordered region spans residues Ala-1007–Gln-1111. Composition is skewed to polar residues over residues Asn-1017–Pro-1038 and Ser-1057–Asn-1082.

The protein belongs to the TRAFAC class myosin-kinesin ATPase superfamily. Kinesin family. BimC subfamily. Might be dimeric.

The protein localises to the cytoplasm. Its subcellular location is the cytoskeleton. The protein resides in the spindle. Functionally, required for assembly of the mitotic spindle. Interacts with spindle microtubules to produce an outwardly directed force acting upon the poles. Following spindle assembly, CIN8 and KIP1 apparently act to oppose a force that draws separated poles back together. This force seems to be mediate by KAR3. The chain is Kinesin-like protein KIP1 (KIP1) from Saccharomyces cerevisiae (strain ATCC 204508 / S288c) (Baker's yeast).